The chain runs to 355 residues: UDP-N-acetylglucosamine--N-acetylmuramyl-(pentapeptide) pyrophosphoryl-undecaprenol N-acetylglucosamine transferase (355 aa).

UDP-N-acetyl-alpha-D-glucosamine contacts are provided by residues 15-17 (TGG), Asn127, Arg163, Ser191, Ile244, 263-268 (ALTVSE), and Gln288.

Belongs to the glycosyltransferase 28 family. MurG subfamily.

It localises to the cell inner membrane. It catalyses the reaction di-trans,octa-cis-undecaprenyl diphospho-N-acetyl-alpha-D-muramoyl-L-alanyl-D-glutamyl-meso-2,6-diaminopimeloyl-D-alanyl-D-alanine + UDP-N-acetyl-alpha-D-glucosamine = di-trans,octa-cis-undecaprenyl diphospho-[N-acetyl-alpha-D-glucosaminyl-(1-&gt;4)]-N-acetyl-alpha-D-muramoyl-L-alanyl-D-glutamyl-meso-2,6-diaminopimeloyl-D-alanyl-D-alanine + UDP + H(+). It participates in cell wall biogenesis; peptidoglycan biosynthesis. In terms of biological role, cell wall formation. Catalyzes the transfer of a GlcNAc subunit on undecaprenyl-pyrophosphoryl-MurNAc-pentapeptide (lipid intermediate I) to form undecaprenyl-pyrophosphoryl-MurNAc-(pentapeptide)GlcNAc (lipid intermediate II). This chain is UDP-N-acetylglucosamine--N-acetylmuramyl-(pentapeptide) pyrophosphoryl-undecaprenol N-acetylglucosamine transferase, found in Citrobacter koseri (strain ATCC BAA-895 / CDC 4225-83 / SGSC4696).